The primary structure comprises 75 residues: Small ribosomal subunit protein bS18c (75 aa).

The protein belongs to the bacterial ribosomal protein bS18 family. Part of the 30S ribosomal subunit.

The protein resides in the plastid. It localises to the chloroplast. This is Small ribosomal subunit protein bS18c from Adiantum capillus-veneris (Maidenhair fern).